A 621-amino-acid polypeptide reads, in one-letter code: 1-deoxy-D-xylulose-5-phosphate synthase (621 aa).

Residues His-80 and 121–123 contribute to the thiamine diphosphate site; that span reads GHS. Asp-152 lines the Mg(2+) pocket. Residues 153-154, Asn-181, Tyr-288, and Glu-370 each bind thiamine diphosphate; that span reads GA. Residue Asn-181 coordinates Mg(2+).

Belongs to the transketolase family. DXPS subfamily. Homodimer. Requires Mg(2+) as cofactor. The cofactor is thiamine diphosphate.

The enzyme catalyses D-glyceraldehyde 3-phosphate + pyruvate + H(+) = 1-deoxy-D-xylulose 5-phosphate + CO2. The protein operates within metabolic intermediate biosynthesis; 1-deoxy-D-xylulose 5-phosphate biosynthesis; 1-deoxy-D-xylulose 5-phosphate from D-glyceraldehyde 3-phosphate and pyruvate: step 1/1. Catalyzes the acyloin condensation reaction between C atoms 2 and 3 of pyruvate and glyceraldehyde 3-phosphate to yield 1-deoxy-D-xylulose-5-phosphate (DXP). The protein is 1-deoxy-D-xylulose-5-phosphate synthase of Shewanella woodyi (strain ATCC 51908 / MS32).